We begin with the raw amino-acid sequence, 504 residues long: Maturase K (504 aa).

This sequence belongs to the intron maturase 2 family. MatK subfamily.

It is found in the plastid. The protein localises to the chloroplast. In terms of biological role, usually encoded in the trnK tRNA gene intron. Probably assists in splicing its own and other chloroplast group II introns. This chain is Maturase K, found in Olimarabidopsis pumila (Dwarf rocket).